Reading from the N-terminus, the 633-residue chain is Probable potassium transport system protein Kup 2 (633 aa).

12 consecutive transmembrane segments (helical) span residues 18–38 (FLALTIGAIGVVYGDIGTSPL), 61–81 (LVSLVLWTLTAIVTIKYVLFL), 107–127 (PVLMFFAGVLGAALFIGDAMI), 143–163 (VAPALHDYVLPISVVIILLLF), 173–193 (VSVFFGPITLVWFLMMAAAGV), 211–231 (AIGFLWNAGLIGFIVLGAIFL), 255–275 (WFAVVFPALALNYLGQGALVL), 287–307 (LMFPNWALLPMVILATAATII), 345–365 (IYLPLVNTILLTGVLALMLMF), 371–391 (LAPAYGVSITGAMVIDTILAF), 402–422 (ALTAIAVLLPLFNLELVFLGA), and 427–447 (VHHGGYVPILIAGTLITMMWT).

It belongs to the HAK/KUP transporter (TC 2.A.72) family.

It localises to the cell inner membrane. The enzyme catalyses K(+)(in) + H(+)(in) = K(+)(out) + H(+)(out). In terms of biological role, transport of potassium into the cell. Likely operates as a K(+):H(+) symporter. The chain is Probable potassium transport system protein Kup 2 from Rhizobium meliloti (strain 1021) (Ensifer meliloti).